Reading from the N-terminus, the 514-residue chain is Arabinose import ATP-binding protein AraG (514 aa).

ABC transporter domains lie at leucine 16–arginine 251 and arginine 251–histidine 507. Glycine 48–serine 55 contributes to the ATP binding site.

It belongs to the ABC transporter superfamily. Arabinose importer (TC 3.A.1.2.2) family. As to quaternary structure, the complex is composed of two ATP-binding proteins (AraG), two transmembrane proteins (AraH) and a solute-binding protein (AraF).

The protein localises to the cell inner membrane. The enzyme catalyses L-arabinose(out) + ATP + H2O = L-arabinose(in) + ADP + phosphate + H(+). In terms of biological role, part of the ABC transporter complex AraFGH involved in arabinose import. Responsible for energy coupling to the transport system. In Pseudomonas fluorescens (strain Pf0-1), this protein is Arabinose import ATP-binding protein AraG.